Here is a 311-residue protein sequence, read N- to C-terminus: MKEDVAEMEKKETKCPECGSTKLINDHERGEVVCGACGLVIDDNIVDMGPEWRAFDHEQRDKRTRVGAPITYTIHDKGLSTMIDWRNKDIYGRDIPARNRAQWYRLRKWQRKIRISGATERNLAFALSELDRDSSRLGLPRSVRESASVVYRNAVENKLIRGRSIEGVVAASLYAACRRCKVPRTLDEIADVSRVSKKEVGRTYRFLTRELHIRLPPTSPIDYVPRFASELNLSGVVQSKAIEIINQAMDNGLTSGRGPTGVAAAALYIASVLLGERKTQRDVADIAGVTEVTIRNRYKELTEQLDMGVNL.

The TFIIB-type zinc finger occupies 11–42 (KETKCPECGSTKLINDHERGEVVCGACGLVID). Zn(2+) contacts are provided by Cys15, Cys18, Cys34, and Cys37. 2 tandem repeats follow at residues 128-211 (SELD…TREL) and 222-303 (DYVP…ELTE).

This sequence belongs to the TFIIB family.

Functionally, stabilizes TBP binding to an archaeal box-A promoter. Also responsible for recruiting RNA polymerase II to the pre-initiation complex (DNA-TBP-TFIIB). The chain is Transcription initiation factor IIB from Methanosphaera stadtmanae (strain ATCC 43021 / DSM 3091 / JCM 11832 / MCB-3).